Reading from the N-terminus, the 540-residue chain is Sterol 14-alpha demethylase (540 aa).

Residues 41 to 61 form a helical membrane-spanning segment; the sequence is PLFLVSGFLGVCVAYAVANII. C485 contributes to the heme binding site.

Belongs to the cytochrome P450 family. The cofactor is heme.

It localises to the membrane. It catalyses the reaction a 14alpha-methyl steroid + 3 reduced [NADPH--hemoprotein reductase] + 3 O2 = a Delta(14) steroid + formate + 3 oxidized [NADPH--hemoprotein reductase] + 4 H2O + 4 H(+). The catalysed reaction is a 14alpha-methyl steroid + reduced [NADPH--hemoprotein reductase] + O2 = a 14alpha-hydroxymethyl steroid + oxidized [NADPH--hemoprotein reductase] + H2O + H(+). It carries out the reaction a 14alpha-hydroxymethyl steroid + reduced [NADPH--hemoprotein reductase] + O2 = a 14alpha-formyl steroid + oxidized [NADPH--hemoprotein reductase] + 2 H2O + H(+). The enzyme catalyses a 14alpha-formyl steroid + reduced [NADPH--hemoprotein reductase] + O2 = a Delta(14) steroid + formate + oxidized [NADPH--hemoprotein reductase] + H2O + 2 H(+). It catalyses the reaction lanosterol + 3 reduced [NADPH--hemoprotein reductase] + 3 O2 = 4,4-dimethyl-5alpha-cholesta-8,14,24-trien-3beta-ol + formate + 3 oxidized [NADPH--hemoprotein reductase] + 4 H2O + 4 H(+). The catalysed reaction is lanosterol + reduced [NADPH--hemoprotein reductase] + O2 = 32-hydroxylanosterol + oxidized [NADPH--hemoprotein reductase] + H2O + H(+). It carries out the reaction 32-hydroxylanosterol + reduced [NADPH--hemoprotein reductase] + O2 = 32-oxolanosterol + oxidized [NADPH--hemoprotein reductase] + 2 H2O + H(+). The enzyme catalyses 32-oxolanosterol + reduced [NADPH--hemoprotein reductase] + O2 = 4,4-dimethyl-5alpha-cholesta-8,14,24-trien-3beta-ol + formate + oxidized [NADPH--hemoprotein reductase] + H2O + 2 H(+). It catalyses the reaction eburicol + 3 reduced [NADPH--hemoprotein reductase] + 3 O2 = 14-demethyleburicol + formate + 3 oxidized [NADPH--hemoprotein reductase] + 4 H2O + 4 H(+). The catalysed reaction is eburicol + reduced [NADPH--hemoprotein reductase] + O2 = 32-hydroxyeburicol + oxidized [NADPH--hemoprotein reductase] + H2O + H(+). It carries out the reaction 32-hydroxyeburicol + reduced [NADPH--hemoprotein reductase] + O2 = 32-oxoeburicol + oxidized [NADPH--hemoprotein reductase] + 2 H2O + H(+). The enzyme catalyses 32-oxoeburicol + reduced [NADPH--hemoprotein reductase] + O2 = 14-demethyleburicol + formate + oxidized [NADPH--hemoprotein reductase] + H2O + 2 H(+). The protein operates within steroid biosynthesis; sterol biosynthesis. In terms of biological role, sterol 14-alpha demethylase; part of the gene cluster that mediates the biosynthesis of tetrahydropyranyl antifungal agent lanomycin that acts as an inhibitor of CYP51 and blocks the ergosterol biosynthesis. Sterol 14-alpha-demethylase plays a critical role in the biosynthesis of ergosterol, the major sterol component in fungal membranes that participates in a variety of functions. Acts as a self-resistant CYP51 that contains mutations found in CYP51s isolated from azole resistance strains and that is not inhibited by the final product of the cluster, lanomycin. This chain is Sterol 14-alpha demethylase, found in Pyrenophora dematioidea (Helminthosporium dematioideum).